A 306-amino-acid polypeptide reads, in one-letter code: MNDYNHYFHFPREEWRKLEVSKDQILTAEELEEIRGLNDRISLQDISEIYLPLIKLIAIQYHEAIFIHGEKMEYLKKKESRAPFIIALAGSVAVGKSTTARVFKLMLDRWFSKTRQVELVTTDGFLFPNKVLEERGIMNKKGFPESYDRDRFAKFLTDLKTNKEAVEVPLYSHFTYDVLDETRMMHNPDIVIIEGINVLQADQHESLFPSDFFDFSVYMDAAEADIKKWYLERFFMLRETAFQDKSSYFHQYTKINKKEAETFALGVWDTINGVNLKENIEKTKYRADLVLHKGTDHLISDIYLRK.

90 to 97 (GSVAVGKS) contributes to the ATP binding site.

It belongs to the prokaryotic pantothenate kinase family.

It is found in the cytoplasm. It carries out the reaction (R)-pantothenate + ATP = (R)-4'-phosphopantothenate + ADP + H(+). It participates in cofactor biosynthesis; coenzyme A biosynthesis; CoA from (R)-pantothenate: step 1/5. This is Pantothenate kinase from Listeria welshimeri serovar 6b (strain ATCC 35897 / DSM 20650 / CCUG 15529 / CIP 8149 / NCTC 11857 / SLCC 5334 / V8).